The following is a 347-amino-acid chain: Holliday junction branch migration complex subunit RuvB (347 aa).

Polar residues predominate over residues 1 to 10 (MAIVSSSSGR). Positions 1-29 (MAIVSSSSGRKSPCRETALVDPQPAPEEQ) are disordered. Positions 13 to 198 (PCRETALVDP…FGLIQRLEFY (186 aa)) are large ATPase domain (RuvB-L). Residues L37, R38, G79, K82, T83, T84, R188, Y198, and R235 each coordinate ATP. T83 lines the Mg(2+) pocket. Residues 199–270 (GQTDLEAIVA…MVAEALSLHR (72 aa)) are small ATPAse domain (RuvB-S). The head domain (RuvB-H) stretch occupies residues 273–347 (HRGLDASDRR…AARSHIAEAA (75 aa)). R328 and R333 together coordinate DNA.

This sequence belongs to the RuvB family. In terms of assembly, homohexamer. Forms an RuvA(8)-RuvB(12)-Holliday junction (HJ) complex. HJ DNA is sandwiched between 2 RuvA tetramers; dsDNA enters through RuvA and exits via RuvB. An RuvB hexamer assembles on each DNA strand where it exits the tetramer. Each RuvB hexamer is contacted by two RuvA subunits (via domain III) on 2 adjacent RuvB subunits; this complex drives branch migration. In the full resolvosome a probable DNA-RuvA(4)-RuvB(12)-RuvC(2) complex forms which resolves the HJ.

It localises to the cytoplasm. It catalyses the reaction ATP + H2O = ADP + phosphate + H(+). In terms of biological role, the RuvA-RuvB-RuvC complex processes Holliday junction (HJ) DNA during genetic recombination and DNA repair, while the RuvA-RuvB complex plays an important role in the rescue of blocked DNA replication forks via replication fork reversal (RFR). RuvA specifically binds to HJ cruciform DNA, conferring on it an open structure. The RuvB hexamer acts as an ATP-dependent pump, pulling dsDNA into and through the RuvAB complex. RuvB forms 2 homohexamers on either side of HJ DNA bound by 1 or 2 RuvA tetramers; 4 subunits per hexamer contact DNA at a time. Coordinated motions by a converter formed by DNA-disengaged RuvB subunits stimulates ATP hydrolysis and nucleotide exchange. Immobilization of the converter enables RuvB to convert the ATP-contained energy into a lever motion, pulling 2 nucleotides of DNA out of the RuvA tetramer per ATP hydrolyzed, thus driving DNA branch migration. The RuvB motors rotate together with the DNA substrate, which together with the progressing nucleotide cycle form the mechanistic basis for DNA recombination by continuous HJ branch migration. Branch migration allows RuvC to scan DNA until it finds its consensus sequence, where it cleaves and resolves cruciform DNA. The polypeptide is Holliday junction branch migration complex subunit RuvB (Synechococcus sp. (strain CC9902)).